Here is a 165-residue protein sequence, read N- to C-terminus: Endoribonuclease YbeY (165 aa).

The Zn(2+) site is built by His-130, His-134, and His-140.

It belongs to the endoribonuclease YbeY family. Zn(2+) is required as a cofactor.

It is found in the cytoplasm. Functionally, single strand-specific metallo-endoribonuclease involved in late-stage 70S ribosome quality control and in maturation of the 3' terminus of the 16S rRNA. The sequence is that of Endoribonuclease YbeY from Streptococcus suis (strain 98HAH33).